Consider the following 591-residue polypeptide: Protein phosphatase EYA1 (591 aa).

Disordered regions lie at residues 1–95 (MEMQ…SYPH), 150–169 (GLSQSQSPGQTGFLSYGTSF), and 239–319 (MTSS…PDSD). Residues 8–23 (SPHSRLSGSSESPSGP) show a composition bias toward low complexity. The span at 28 to 53 (SHINSTSMTPNGTEVKTEPMSSSEIA) shows a compositional bias: polar residues. A compositionally biased stretch (low complexity) spans 56–75 (AADGSLDSFSGSALGSSSFS). Residues 78-87 (PAHPFSPPQI) show a composition bias toward pro residues. Over residues 240–252 (TSSNTSPTTPSTN) the composition is skewed to low complexity. Residues 253-286 (ATYQLQEPPSGVTSQAVTDPTAEYSTIHSPSTPI) show a composition bias toward polar residues. A compositionally biased stretch (basic and acidic residues) spans 287–302 (KETDSERLRRGSDGKS). Asp327 acts as the Nucleophile in catalysis. Asp327, Asp329, and Asp555 together coordinate Mg(2+). Asp329 serves as the catalytic Proton donor.

It belongs to the HAD-like hydrolase superfamily. EYA family. In terms of assembly, probably interacts with SIX2, SIX4 and SIX5. Interacts with H2AX in response to DNA damage. Interacts with SIX3; promotes EYA1 translocation to the nucleus. It depends on Mg(2+) as a cofactor. In terms of processing, sumoylated with SUMO1. In terms of tissue distribution, extensively expressed in cranial placodes, branchial arches, CNS and developing eye and nose.

It localises to the cytoplasm. It is found in the nucleus. It catalyses the reaction O-phospho-L-tyrosyl-[protein] + H2O = L-tyrosyl-[protein] + phosphate. It carries out the reaction O-phospho-L-seryl-[protein] + H2O = L-seryl-[protein] + phosphate. The enzyme catalyses O-phospho-L-threonyl-[protein] + H2O = L-threonyl-[protein] + phosphate. Its function is as follows. Functions both as protein phosphatase and as transcriptional coactivator for SIX1, and probably also for SIX2, SIX4 and SIX5. Tyrosine phosphatase that dephosphorylates 'Tyr-142' of histone H2AX (H2AXY142ph) and promotes efficient DNA repair via the recruitment of DNA repair complexes containing MDC1. 'Tyr-142' phosphorylation of histone H2AX plays a central role in DNA repair and acts as a mark that distinguishes between apoptotic and repair responses to genotoxic stress. Its function as histone phosphatase may contribute to its function in transcription regulation during organogenesis. Also has phosphatase activity with proteins phosphorylated on Ser and Thr residues (in vitro). Required for normal embryonic development of the craniofacial and trunk skeleton, kidneys and ears. Together with SIX1, it plays an important role in hypaxial muscle development; in this it is functionally redundant with EYA2. The chain is Protein phosphatase EYA1 (Eya1) from Mus musculus (Mouse).